Here is a 158-residue protein sequence, read N- to C-terminus: uncharacterized protein (158 aa).

This is an uncharacterized protein from Mycobacterium tuberculosis (strain CDC 1551 / Oshkosh).